The following is a 126-amino-acid chain: Small ribosomal subunit protein uS13 (126 aa).

The interval 95 to 126 (GMPVRGQRTRTNARTRRGRRGQAIGIKKKVKK) is disordered.

This sequence belongs to the universal ribosomal protein uS13 family. As to quaternary structure, part of the 30S ribosomal subunit. Forms a loose heterodimer with protein S19. Forms two bridges to the 50S subunit in the 70S ribosome.

In terms of biological role, located at the top of the head of the 30S subunit, it contacts several helices of the 16S rRNA. In the 70S ribosome it contacts the 23S rRNA (bridge B1a) and protein L5 of the 50S subunit (bridge B1b), connecting the 2 subunits; these bridges are implicated in subunit movement. Contacts the tRNAs in the A and P-sites. This Chloroflexus aggregans (strain MD-66 / DSM 9485) protein is Small ribosomal subunit protein uS13.